The primary structure comprises 100 residues: Small ribosomal subunit protein uS14c (100 aa).

This sequence belongs to the universal ribosomal protein uS14 family. In terms of assembly, part of the 30S ribosomal subunit.

The protein localises to the plastid. Functionally, binds 16S rRNA, required for the assembly of 30S particles. The sequence is that of Small ribosomal subunit protein uS14c from Aneura mirabilis (Parasitic liverwort).